The primary structure comprises 362 residues: Neisseria adhesin A (362 aa).

A signal peptide spans 1 to 23 (MKHFPSKVLTTAILATFCSGALA). The interval 24–169 (ATSDDDVKKA…NIVKIDEKLE (146 aa)) is head domain. Coiled-coil stretches lie at residues 90-146 (VTNL…LNKL) and 183-288 (NDIA…KETR). Residues 170 to 307 (AVADTVDKHA…SGLFQPYNVG (138 aa)) form a coiled stalk domain region. Transmembrane regions (beta stranded) follow at residues 307–317 (GRFNVTAAVGG), 321–332 (ESAVAIGTGFRF), 339–345 (KAGVAVG), and 351–362 (SAAYHVGVNYEW). The tract at residues 308–362 (RFNVTAAVGGYKSESAVAIGTGFRFTENFAAKAGVAVGTSSGSSAAYHVGVNYEW) is translocator domain.

The protein belongs to the autotransporter-2 (AT-2) (TC 1.B.40) family. As to quaternary structure, forms high molecular weight oligomers in whole cell extracts that are not disrupted by boiling in SDS buffer. Homotrimer. A fragment containing the N-terminal half of the mature protein (residues 24-210, head domain plus part of the stalk) binds human integrin beta-1 (ITGB1). It was not seen to bind immobilized purified CEACAMs 1, 3, 5, 6 or 8 nor commercially prepared type I collagen, fibronectin or matrigel.

It localises to the cell surface. Its subcellular location is the cell outer membrane. In terms of biological role, adheres to and induces bacterial uptake by human epithelial cells. Upon expression in engineered Y.enterocolitica confers an 11- to 15-fold increase in bacterial adherence and uptake by human epithelial cell lines; part of the uptake is mediated by integrin beta-1 (ITGB1) suggesting it may be a human receptor for NadA. A bacterial cell surface protein; antisera against this protein induce complement-mediated killing of this and other strains. In Neisseria meningitidis serogroup B (strain ATCC BAA-335 / MC58), this protein is Neisseria adhesin A.